The chain runs to 304 residues: Tyrosine recombinase XerC (304 aa).

Residues 2–88 enclose the Core-binding (CB) domain; sequence ENVKNFVKLF…ALRSFYKFLM (87 aa). The Tyr recombinase domain maps to 109-294; that stretch reads RIPKFLYQKE…SKEMLRNTYM (186 aa). Active-site residues include Arg149, Lys173, His246, Arg249, and His272. Tyr281 (O-(3'-phospho-DNA)-tyrosine intermediate) is an active-site residue.

It belongs to the 'phage' integrase family. XerC subfamily. Forms a cyclic heterotetrameric complex composed of two molecules of XerC and two molecules of XerD.

It is found in the cytoplasm. Site-specific tyrosine recombinase, which acts by catalyzing the cutting and rejoining of the recombining DNA molecules. The XerC-XerD complex is essential to convert dimers of the bacterial chromosome into monomers to permit their segregation at cell division. It also contributes to the segregational stability of plasmids. This is Tyrosine recombinase XerC from Bacillus subtilis (strain 168).